The chain runs to 1049 residues: Protein phosphatase 1 regulatory subunit 12A (1049 aa).

6 ANK repeats span residues 39–68, 72–101, 105–134, 138–164, 198–227, and 231–260; these read DDGAVFLAACSSGDTEEVLRMLDRGADINY, DGLTALHQACIDDNVDMVTFLVEHGACINQ, EGWIPLHAAASCGYLDIAEYLISQGASVGV, EGETPLDIAEEEAMEELLQNEINRQGV, SGGTALHVAAAKGYAEVLKLLIQAGYDVNI, and DGWTPLHAAAHWGKEEACRILVEHLCDMDV. The disordered stretch occupies residues 302–947; the sequence is LIETTTTGDN…RPYSRFEKDD (646 aa). Residues 303-315 show a composition bias toward polar residues; it reads IETTTTGDNNQSV. Over residues 319 to 341 the composition is skewed to basic and acidic residues; the sequence is KSKETLLLEPEKTAPRIETLEPE. A compositionally biased stretch (acidic residues) spans 359 to 371; that stretch reads SEEEEEEDSESEN. Residues 378-421 show a composition bias toward low complexity; that stretch reads SSVPSSVSNSTPTTAPSSITVTSPTTPSNQVTTPTSPTKKVSTP. Over residues 426 to 436 the composition is skewed to basic and acidic residues; the sequence is SPKEEDRKDES. Over residues 473–484 the composition is skewed to low complexity; it reads RSASSPRLSSSL. The span at 485-497 shows a compositional bias: basic and acidic residues; that stretch reads DNKDKEKEKEKTR. A compositionally biased stretch (polar residues) spans 545–564; it reads SDGTASTNRTSSYQRSTSHT. Low complexity predominate over residues 571 to 592; it reads SSSRDLPAKSSSASSLEPNNSK. The segment covering 593-607 has biased composition (polar residues); it reads AWQPSSYYQSYSIHR. Positions 620–639 are enriched in low complexity; sequence SSTSSSTTTTTTTSSVTSPT. Residues 649 to 664 show a composition bias toward basic and acidic residues; that stretch reads WAEESAEKEKEKEKES. Residues 665–686 are compositionally biased toward low complexity; the sequence is ATVIPTINTAGTTTTTSTTGTV. Basic and acidic residues predominate over residues 702 to 711; the sequence is VRDEESESQR. The segment covering 712–722 has biased composition (basic residues); it reads KARSRQARQSR. The segment covering 747-789 has biased composition (basic and acidic residues); that stretch reads RPREDEKEEKEKQDKEKQEEKKETETKEDDYRSRYRSFEEKYR. Residues 790–819 show a composition bias toward low complexity; sequence TSLASSTTASSTIPSSSSSSSSSLYSTSSL. Polar residues predominate over residues 820–829; it reads NRPNSLTGLT. Positions 835 to 863 are enriched in basic and acidic residues; sequence STRDTDRESDRKEKDEDRDGDDKSQPRSI. The span at 864–875 shows a compositional bias: basic residues; it reads RDRRRPREKRRS. 2 stretches are compositionally biased toward basic and acidic residues: residues 890-906 and 934-947; these read PDHPSDSEGSTKGEPQS and GESRRPYSRFEKDD.

PP1 comprises a catalytic subunit, and one or several targeting or regulatory subunits. Ppp1r12a mediates binding to myosin.

The protein localises to the cytoplasm. In terms of biological role, regulates myosin phosphatase activity. This chain is Protein phosphatase 1 regulatory subunit 12A (ppp1r12a), found in Danio rerio (Zebrafish).